Here is a 456-residue protein sequence, read N- to C-terminus: uncharacterized protein (456 aa).

A compositionally biased stretch (low complexity) spans 415–428 (SNSNGSSSSGNSSS). The tract at residues 415–444 (SNSNGSSSSGNSSSIYNSHLMNDKKKNNNA) is disordered.

This is an uncharacterized protein from Saccharomyces cerevisiae (strain ATCC 204508 / S288c) (Baker's yeast).